A 169-amino-acid polypeptide reads, in one-letter code: Protein Flattop homolog (169 aa).

The segment at 53–169 (IPRSSRSPWG…SPKLATPEPC (117 aa)) is disordered. A compositionally biased stretch (polar residues) spans 119-130 (VQASPRNASPLQ).

This sequence belongs to the Flattop family.

The protein resides in the cytoplasm. It localises to the cytoskeleton. Its subcellular location is the cilium basal body. It is found in the cell projection. The protein localises to the cilium. The protein resides in the apical cell membrane. Its function is as follows. Acts as a regulator of cilium basal body docking and positioning in mono- and multiciliated cells. The chain is Protein Flattop homolog from Nematostella vectensis (Starlet sea anemone).